A 189-amino-acid polypeptide reads, in one-letter code: uncharacterized protein (189 aa).

Residues 31–54 adopt a coiled-coil conformation; it reads KCENIDDLANRYEVSKQEVEKVFK. EF-hand domains lie at 47-82, 83-118, 120-155, and 157-189; these read QEVE…LGID, VSPK…KIKL, TVKA…TVST, and ITVK…CQTV. The Ca(2+) site is built by Asp-60, Asp-62, Ser-64, Thr-66, Glu-71, Asp-96, Ser-98, Asp-100, Gln-102, Glu-107, Asp-133, Asn-135, Glu-137, and Glu-144.

This is an uncharacterized protein from Caenorhabditis elegans.